The primary structure comprises 390 residues: Magnesium-protoporphyrin IX monomethyl ester [oxidative] cyclase (390 aa).

It belongs to the AcsF family. The cofactor is Fe cation.

It catalyses the reaction Mg-protoporphyrin IX 13-monomethyl ester + 3 NADPH + 3 O2 + 2 H(+) = 3,8-divinyl protochlorophyllide a + 3 NADP(+) + 5 H2O. It functions in the pathway porphyrin-containing compound metabolism; chlorophyll biosynthesis (light-independent). Functionally, catalyzes the formation of the isocyclic ring in chlorophyll biosynthesis. Mediates the cyclase reaction, which results in the formation of divinylprotochlorophyllide (Pchlide) characteristic of all chlorophylls from magnesium-protoporphyrin IX 13-monomethyl ester (MgPMME). This is Magnesium-protoporphyrin IX monomethyl ester [oxidative] cyclase from Prochlorococcus marinus (strain AS9601).